Reading from the N-terminus, the 315-residue chain is uncharacterized protein (315 aa).

Belongs to the asfivirus C315R family.

This is an uncharacterized protein from Ornithodoros (relapsing fever ticks).